Reading from the N-terminus, the 1385-residue chain is MAERANLVFHNKVIDGTAIKRLISRLIDHFGMAYTSHILDQVKTLGFQQATATSISLGIDDLLTIPSKGWLVQDAEQQSLILEKHHHYGNVHAVEKLRQSIEIWYATSEYLRQEMNPNFRMTDPFNPVHMMSFSGARGNASQVHQLVGMRGLMSDPQGQMIDLPIQSNLREGLSLTEYIISCYGARKGVVDTAVRTSDAGYLTRRLVEVVQHIVVRRTDCGTIRGISVSPRNKNRMMSERIFIQTLIGRVLADDIYIGSRCVAFRNQDLGIGLVNRFITFGTQSISIRTPFTCRSTSWICRFCYGRSPTHGDLVELGEAVGIIAGQSIGEPGTQLTLRTFHTGGVFTGGTAEHVRAPYNGKIKFNEDLVHPTRTRHGHPAFLCYIDLSVIIESEDIIHSVTIPPKSFLLVQNDQYVESEQVIAEIREGTYTFRFKERVRKYIYSDSEGEMHWSTDVYHAPEFTYSNVHLVPKTSHLWILSGGSCGASLILFSIHKDQDQMNIPFLSVKRKSICSLSVNNDQVSQKFFSSDFSDKKKSGIPDYSELNGIVGTSHYNLIYSAIFHENSDLLAKRRRNRFLIPFESIQEQEQEKEFMPHSGISIAIPINGIFRKNTIFSFFDDPRYRRKSSGILKYGTIEADSIIQKEDMIEYRGVHKFKKNYKMKVDRFFFIPEEVHILPESSVIMVQNYSIIRVDTRITLNIRSQVGGLIRVERKKKRIELKIFSGDIHFPDKTDKISRHSGILIPPGRGKPNSRESKKVKNWIYVQRITPTKKKFFVLVRPVATYEIADSINLATLFPQDLFREKNNIQLRVVNYILYGNGKPTRGISDTSIQLVRTCLVLNWDQDNKNSSLEEARAFFVAVSTKGLIRDFIRIGLVKSHISYIRKRNNPPDSGLISADHMNPFYSISPKAGIQQSLSQNNGTIRMFLNRNKESQFLLILSSSNCFRMGPFDHVKYHNVINQSIKKNPLITIKNASGPLGTTIQISNFYSFFPLLTYNKMSVIKYLQLDNLKQILKVINSYLIDENGRICNRDPYSNVVLNPFKLNWYFLHQNYHHNYCEEMSTLISLGQFFCENVCIAKKGPHLKSGQALIVQMDSVVIRSAKPYLATPGAKVHGHYGEILYEGDTLVTFIYEKSRSGDITQGLPKVEQVLEVRSIDSISMNLEKRIKGWNKYITGILGIPWGFLVGAELTIVQSRLSLVNKIQKVYRSQGVQIHNRHIEIIVRQITSKVLVSEEGMSNVFLPGELIGLLRAERTGRALEEAISYRAILLGITRASLNTQSFISEASFQETARVLAKAALRGRIDWLKGLKENVVLGGGIPAGTGFNKGLVHCSRQHTNILLEKKTKNFCLFEEDMRDILFYHREFFDSSISKFERSFLGFNDS.

Zn(2+) is bound by residues C220, C293, C300, and C303.

This sequence belongs to the RNA polymerase beta' chain family. RpoC2 subfamily. In plastids the minimal PEP RNA polymerase catalytic core is composed of four subunits: alpha, beta, beta', and beta''. When a (nuclear-encoded) sigma factor is associated with the core the holoenzyme is formed, which can initiate transcription. Requires Zn(2+) as cofactor.

It is found in the plastid. Its subcellular location is the chloroplast. It carries out the reaction RNA(n) + a ribonucleoside 5'-triphosphate = RNA(n+1) + diphosphate. DNA-dependent RNA polymerase catalyzes the transcription of DNA into RNA using the four ribonucleoside triphosphates as substrates. The protein is DNA-directed RNA polymerase subunit beta'' of Aethionema cordifolium (Lebanon stonecress).